A 94-amino-acid chain; its full sequence is Putative testis-specific prion protein (94 aa).

Positions 1-18 (MQHSLVFFFAVILHLSHL) are cleaved as a signal peptide. Asparagine 44 carries N-linked (GlcNAc...) asparagine glycosylation.

In terms of tissue distribution, specifically expressed in adult testis.

The protein resides in the secreted. This chain is Putative testis-specific prion protein (PRNT), found in Homo sapiens (Human).